Consider the following 1207-residue polypeptide: DNA-directed RNA polymerase subunit beta' (1207 aa).

Zn(2+) is bound by residues Cys-60, Cys-62, Cys-75, and Cys-78. Mg(2+)-binding residues include Asp-450, Asp-452, and Asp-454. Residues Cys-819, Cys-893, Cys-900, and Cys-903 each coordinate Zn(2+).

It belongs to the RNA polymerase beta' chain family. The RNAP catalytic core consists of 2 alpha, 1 beta, 1 beta' and 1 omega subunit. When a sigma factor is associated with the core the holoenzyme is formed, which can initiate transcription. It depends on Mg(2+) as a cofactor. Requires Zn(2+) as cofactor.

The enzyme catalyses RNA(n) + a ribonucleoside 5'-triphosphate = RNA(n+1) + diphosphate. In terms of biological role, DNA-dependent RNA polymerase catalyzes the transcription of DNA into RNA using the four ribonucleoside triphosphates as substrates. The protein is DNA-directed RNA polymerase subunit beta' of Streptococcus pyogenes serotype M3 (strain SSI-1).